Consider the following 525-residue polypeptide: MASYFALVLNGISMVFSQGLFPLYTIPDHLGPWTPIDLSHLHCPNNLYTDASYCTTEQSITYTELKVGSSVSQKIPGFTCTGVRTESVTYTNFVGYVTTTFKKKHFPPKSRDCREAYERKKAGDPRYEESLAHPYPDNSWLRTVTTTKDSWVIIEPSVVELDIYTSALYSPLFKDGTCSKSRTYSPYCPTNHDFTIWMPESENIRSACNLFSTSRGKLVRNRTSTCGIIDERGLFRSVKGACKISICGRQGIRLVDGTWMSFRYSEYLPVCSPSQLINTHDIKVDELENAIVLDLIRRREECLDTLETILMSGSVSHRRLSHFRKLVPGSGKAYSYINGTLMESDAHYIKVENWSEVIPHKGCLMVGGKCYEPVNDVYFNGIIRDSNNQILIPEMQSSLLREHVDLLKANIVPFRHPMLLRSFTSDTEEDIVEFVNPHLQDTQKLVSDMDLGLSDWKRYLLIGSLAVGGVVAILFIGTCCLRCRAGRNRRTIRSNHRSLSHDVVFHKDKDKVITSWESYKGQTAQ.

Positions 1-17 (MASYFALVLNGISMVFS) are cleaved as a signal peptide. The Virion surface portion of the chain corresponds to 18–459 (QGLFPLYTIP…DLGLSDWKRY (442 aa)). 2 N-linked (GlcNAc...) asparagine; by host glycosylation sites follow: asparagine 221 and asparagine 338. A helical membrane pass occupies residues 460 to 480 (LLIGSLAVGGVVAILFIGTCC). Residue cysteine 480 is the site of S-palmitoyl cysteine; by host attachment. Residues 481–525 (LRCRAGRNRRTIRSNHRSLSHDVVFHKDKDKVITSWESYKGQTAQ) lie on the Intravirion side of the membrane.

Belongs to the lyssavirus glycoprotein family. In terms of assembly, homotrimer. Interacts with matrix protein. Post-translationally, glycosylated and palmitoylated by host. Glycosylation is crucial for glycoprotein export at the cell surface.

Its subcellular location is the virion membrane. Functionally, attaches the virus to host cellular receptor, inducing endocytosis of the virion. In the endosome, the acidic pH induces conformational changes in the glycoprotein trimer, which trigger fusion between virus and cell membrane. There is convincing in vitro evidence that the muscular form of the nicotinic acetylcholine receptor (nAChR), the neuronal cell adhesion molecule (NCAM), and the p75 neurotrophin receptor (p75NTR) bind glycoprotein and thereby facilitate rabies virus entry into cells. This is Glycoprotein (G) from Miniopterus schreibersii (Schreibers's long-fingered bat).